The sequence spans 662 residues: Serine/threonine-protein kinase PTK1/STK1 (662 aa).

A disordered region spans residues 35–119; that stretch reads GNKLKKKASL…SSTSRNLSNS (85 aa). The span at 50–60 shows a compositional bias: low complexity; the sequence is STSTNDSESSS. Polar residues-rich tracts occupy residues 61-91 and 98-119; these read PKLP…SAST and GSST…LSNS. The region spanning 196-503 is the Protein kinase domain; the sequence is DDENKTIGWG…IDDLFEDPWF (308 aa). ATP-binding positions include 202–210 and Lys226; that span reads IGWGGSCEV. Asp329 serves as the catalytic Proton acceptor. A disordered region spans residues 605 to 631; sequence TLTLSEEPPATPAPSAPSAPSARVRGH.

This sequence belongs to the protein kinase superfamily. Ser/Thr protein kinase family.

The enzyme catalyses L-seryl-[protein] + ATP = O-phospho-L-seryl-[protein] + ADP + H(+). It carries out the reaction L-threonyl-[protein] + ATP = O-phospho-L-threonyl-[protein] + ADP + H(+). In terms of biological role, essential determinant for low-affinity spermidine transport. In Saccharomyces cerevisiae (strain ATCC 204508 / S288c) (Baker's yeast), this protein is Serine/threonine-protein kinase PTK1/STK1 (PTK1).